A 960-amino-acid polypeptide reads, in one-letter code: Dynamin-like GTPase OPA1, mitochondrial (960 aa).

The transit peptide at 1 to 87 directs the protein to the mitochondrion; it reads MWRLRRAAVA…IKYGYQPRRN (87 aa). Residues 88 to 96 are Mitochondrial matrix-facing; that stretch reads FWPARLATR. The helical transmembrane segment at 97–113 threads the bilayer; that stretch reads LLKLRYLILGSAVGGGY. Residues 114 to 770 lie on the Mitochondrial intermembrane side of the membrane; that stretch reads TAKKTFDQWK…NAIENMVGPD (657 aa). Residues 210–254 adopt a coiled-coil conformation; that stretch reads SDKEKIDQLQEELLHTQLKYQRILERLEKENKELRKLVLQKDDKG. Lys228 is modified (N6-acetyllysine). One can recognise a Dynamin-type G domain in the interval 285-561; it reads QDHLPRVVVV…FWKMVRESVE (277 aa). The interval 295–302 is G1 motif; that stretch reads GDQSAGKT. Residues Ser298, Gly300, Lys301, Thr302, Ser303, and Gly317 each contribute to the GTP site. Thr302 contributes to the Mg(2+) binding site. Positions 321–324 are G2 motif; the sequence is MMTR. Mg(2+) contacts are provided by Thr323 and Asp398. Residues 398–401 form a G3 motif region; that stretch reads DLPG. A G4 motif region spans residues 467 to 470; sequence TKVD. 3 residues coordinate GTP: Lys468, Asp470, and Thr503. The tract at residues 501 to 504 is G5 motif; that stretch reads VVTG. Stalk region regions lie at residues 589–836 and 874–928; these read DRNE…IKDT and CNDV…IKLL. Positions 736 to 856 are paddle region; it reads SDKQQWDAAI…KTALNHCNLC (121 aa). Residues 771 to 781 lie within the membrane without spanning it; it reads WKKRWLYWKNR. Residues 782–960 are Mitochondrial intermembrane-facing; sequence TQEQCVHNET…AFIEALHQEK (179 aa). Cys856 and Cys874 are joined by a disulfide. The stretch at 895-960 forms a coiled coil; the sequence is RQQLTNTEVR…AFIEALHQEK (66 aa).

This sequence belongs to the TRAFAC class dynamin-like GTPase superfamily. Dynamin/Fzo/YdjA family. In terms of assembly, oligomeric complex consisting of membrane-bound and soluble forms of OPA1. Interacts with RCC1L; RCC1L acts as a guanine nucleotide exchange factor (GEF) for OPA1 by exchanging bound GDP for free GTP. Interacts with CHCHD3 and IMMT; these interactions occur preferentially with soluble OPA1 forms. Interacts with PRELID1. Post-translationally, cleaved by OMA1 or YME1L downstream of the transmembrane region in response to different signals to generate soluble forms. Cleaved by OMA1 at position S1 following stress conditions, generating the short soluble form (Dynamin-like GTPase OPA1, short form; S-OPA1). AFG3L2 is involved in the regulation of OMA1-dependent processing of OPA1. PARL-dependent proteolytic processing releases an antiapoptotic soluble form not required for mitochondrial fusion.

Its subcellular location is the mitochondrion inner membrane. It localises to the mitochondrion intermembrane space. It catalyses the reaction GTP + H2O = GDP + phosphate + H(+). With respect to regulation, activated by guanine nucleotide exchange factor RCC1L. In terms of biological role, dynamin-related GTPase that is essential for normal mitochondrial morphology by mediating fusion of the mitochondrial inner membranes, regulating cristae morphology and maintaining respiratory chain function. Exists in two forms: the transmembrane, long form (Dynamin-like GTPase OPA1, long form; L-OPA1), which is tethered to the inner mitochondrial membrane, and the short soluble form (Dynamin-like GTPase OPA1, short form; S-OPA1), which results from proteolytic cleavage and localizes in the intermembrane space. Both forms (L-OPA1 and S-OPA1) cooperate to catalyze the fusion of the mitochondrial inner membrane. The equilibrium between L-OPA1 and S-OPA1 is essential: excess levels of S-OPA1, produced by cleavage by OMA1 following loss of mitochondrial membrane potential, lead to an impaired equilibrium between L-OPA1 and S-OPA1, inhibiting mitochondrial fusion. The balance between L-OPA1 and S-OPA1 also influences cristae shape and morphology. Involved in remodeling cristae and the release of cytochrome c during apoptosis. Proteolytic processing by PARL in response to intrinsic apoptotic signals may lead to disassembly of OPA1 oligomers and release of the caspase activator cytochrome C (CYCS) into the mitochondrial intermembrane space. Acts as a regulator of T-helper Th17 cells, which are characterized by cells with fused mitochondria with tight cristae, by mediating mitochondrial membrane remodeling: OPA1 is required for interleukin-17 (IL-17) production. Its role in mitochondrial morphology is required for mitochondrial genome maintenance. Functionally, constitutes the transmembrane long form (L-OPA1) that plays a central role in mitochondrial inner membrane fusion and cristae morphology. L-OPA1 and the soluble short form (S-OPA1) form higher-order helical assemblies that coordinate the fusion of mitochondrial inner membranes. Inner membrane-anchored L-OPA1 molecules initiate membrane remodeling by recruiting soluble S-OPA1 to rapidly polymerize into a flexible cylindrical scaffold encaging the mitochondrial inner membrane. Once at the membrane surface, the formation of S-OPA1 helices induce bilayer curvature. OPA1 dimerization through the paddle region, which inserts into cardiolipin-containing membrane, promotes GTP hydrolysis and the helical assembly of a flexible OPA1 lattice on the membrane, which drives membrane curvature and mitochondrial fusion. Plays a role in the maintenance and remodeling of mitochondrial cristae, some invaginations of the mitochondrial inner membrane that provide an increase in the surface area. Probably acts by forming helical filaments at the inside of inner membrane tubes with the shape and dimensions of crista junctions. The equilibrium between L-OPA1 and S-OPA1 influences cristae shape and morphology: increased L-OPA1 levels promote cristae stacking and elongated mitochondria, while increased S-OPA1 levels correlated with irregular cristae packing and round mitochondria shape. Its function is as follows. Constitutes the soluble short form (S-OPA1) generated by cleavage by OMA1, which plays a central role in mitochondrial inner membrane fusion and cristae morphology. The transmembrane long form (L-OPA1) and the S-OPA1 form higher-order helical assemblies that coordinate the fusion of mitochondrial inner membranes. Inner membrane-anchored L-OPA1 molecules initiate membrane remodeling by recruiting soluble S-OPA1 to rapidly polymerize into a flexible cylindrical scaffold encaging the mitochondrial inner membrane. Once at the membrane surface, the formation of S-OPA1 helices induce bilayer curvature. OPA1 dimerization through the paddle region, which inserts into cardiolipin-containing membrane, promotes GTP hydrolysis and the helical assembly of a flexible OPA1 lattice on the membrane, which drives membrane curvature and mitochondrial fusion. Excess levels of S-OPA1 produced by cleavage by OMA1 following stress conditions that induce loss of mitochondrial membrane potential, lead to an impaired equilibrium between L-OPA1 and S-OPA1, thereby inhibiting mitochondrial fusion. Involved in mitochondrial safeguard in response to transient mitochondrial membrane depolarization by mediating flickering: cleavage by OMA1 leads to excess production of S-OPA1, preventing mitochondrial hyperfusion. Plays a role in the maintenance and remodeling of mitochondrial cristae, some invaginations of the mitochondrial inner membrane that provide an increase in the surface area. Probably acts by forming helical filaments at the inside of inner membrane tubes with the shape and dimensions of crista junctions. The equilibrium between L-OPA1 and S-OPA1 influences cristae shape and morphology: increased L-OPA1 levels promote cristae stacking and elongated mitochondria, while increased S-OPA1 levels correlated with irregular cristae packing and round mitochondria shape. The polypeptide is Dynamin-like GTPase OPA1, mitochondrial (Pongo abelii (Sumatran orangutan)).